Here is a 74-residue protein sequence, read N- to C-terminus: Protein SlyX homolog (74 aa).

Belongs to the SlyX family.

The chain is Protein SlyX homolog from Neisseria meningitidis serogroup A / serotype 4A (strain DSM 15465 / Z2491).